The chain runs to 380 residues: Probable inactive dehydrogenase easA (380 aa).

FMN contacts are provided by residues P25 to T27, A60, Q102, and H171. H171 and N174 together coordinate substrate. FMN contacts are provided by residues K223, G299, G324–R325, and R325. Substrate is bound at residue Y352.

This sequence belongs to the NADH:flavin oxidoreductase/NADH oxidase family.

Functionally, probable inactive dehydrogenase; part of the gene cluster that mediates the biosynthesis of fungal ergot alkaloid. DmaW catalyzes the first step of ergot alkaloid biosynthesis by condensing dimethylallyl diphosphate (DMAP) and tryptophan to form 4-dimethylallyl-L-tryptophan. The second step is catalyzed by the methyltransferase easF that methylates 4-dimethylallyl-L-tryptophan in the presence of S-adenosyl-L-methionine, resulting in the formation of 4-dimethylallyl-L-abrine. The catalase easC and the FAD-dependent oxidoreductase easE then transform 4-dimethylallyl-L-abrine to chanoclavine-I which is further oxidized by easD in the presence of NAD(+), resulting in the formation of chanoclavine-I aldehyde. Agroclavine dehydrogenase easG then mediates the conversion of chanoclavine-I aldehyde to agroclavine via a non-enzymatic adduct reaction: the substrate is an iminium intermediate that is formed spontaneously from chanoclavine-I aldehyde in the presence of glutathione. The presence of easA is not required to complete this reaction. Further conversion of agroclavine to paspalic acid is a two-step process involving oxidation of agroclavine to elymoclavine and of elymoclavine to paspalic acid, the second step being performed by the elymoclavine oxidase cloA. Paspalic acid is then further converted to D-lysergic acid. Ergopeptines are assembled from D-lysergic acid and three different amino acids by the D-lysergyl-peptide-synthetases composed each of a monomudular and a trimodular nonribosomal peptide synthetase subunit. LpsB and lpsC encode the monomodular subunits responsible for D-lysergic acid activation and incorporation into the ergopeptine backbone. LpsA1 and A2 subunits encode the trimodular nonribosomal peptide synthetase assembling the tripeptide portion of ergopeptines. LpsA1 is responsible for formation of the major ergopeptine, ergotamine, and lpsA2 for alpha-ergocryptine, the minor ergopeptine of the total alkaloid mixture elaborated by C.purpurea. D-lysergyl-tripeptides are assembled by the nonribosomal peptide synthetases and released as N-(D-lysergyl-aminoacyl)-lactams. Cyclolization of the D-lysergyl-tripeptides is performed by the Fe(2+)/2-ketoglutarate-dependent dioxygenase easH which introduces a hydroxyl group into N-(D-lysergyl-aminoacyl)-lactam at alpha-C of the aminoacyl residue followed by spontaneous condensation with the terminal lactam carbonyl group. This Claviceps purpurea (strain 20.1) (Ergot fungus) protein is Probable inactive dehydrogenase easA.